Consider the following 352-residue polypeptide: NADH-ubiquinone oxidoreductase chain 2 (352 aa).

Transmembrane regions (helical) follow at residues 4–24 (IVST…VSSE), 26–46 (WFII…ILCS), 67–87 (AALL…WSIL), 96–116 (ICLS…FWFP), 124–144 (FFQG…LMFY), 148–168 (LGFS…GGWG), 177–197 (KILA…SAYS), 198–218 (FNAA…LFLL), 241–261 (VALV…TGFI), 264–284 (FTSL…IMII), 290–310 (YFFY…QHII), and 332–352 (SVST…YIIT).

The protein belongs to the complex I subunit 2 family.

Its subcellular location is the mitochondrion inner membrane. It catalyses the reaction a ubiquinone + NADH + 5 H(+)(in) = a ubiquinol + NAD(+) + 4 H(+)(out). Core subunit of the mitochondrial membrane respiratory chain NADH dehydrogenase (Complex I) that is believed to belong to the minimal assembly required for catalysis. Complex I functions in the transfer of electrons from NADH to the respiratory chain. The immediate electron acceptor for the enzyme is believed to be ubiquinone. The polypeptide is NADH-ubiquinone oxidoreductase chain 2 (ND2) (Strongylocentrotus purpuratus (Purple sea urchin)).